A 160-amino-acid chain; its full sequence is Endoribonuclease YbeY (160 aa).

Residues His125, His129, and His135 each coordinate Zn(2+).

It belongs to the endoribonuclease YbeY family. It depends on Zn(2+) as a cofactor.

It is found in the cytoplasm. Functionally, single strand-specific metallo-endoribonuclease involved in late-stage 70S ribosome quality control and in maturation of the 3' terminus of the 16S rRNA. The chain is Endoribonuclease YbeY from Leuconostoc citreum (strain KM20).